The following is a 335-amino-acid chain: Holliday junction branch migration complex subunit RuvB (335 aa).

The segment at 1 to 183 (MDERIISSET…FGVIDHLEFY (183 aa)) is large ATPase domain (RuvB-L). Residues L22, R23, G64, K67, T68, T69, 130-132 (EDY), R173, Y183, and R220 contribute to the ATP site. T68 is a Mg(2+) binding site. Residues 184 to 254 (TEEQLTEIVL…LAKEALTLLQ (71 aa)) form a small ATPAse domain (RuvB-S) region. Positions 257–335 (PRGLDTIDQK…HLGISYEKEV (79 aa)) are head domain (RuvB-H). The DNA site is built by R293, R312, and R317.

This sequence belongs to the RuvB family. In terms of assembly, homohexamer. Forms an RuvA(8)-RuvB(12)-Holliday junction (HJ) complex. HJ DNA is sandwiched between 2 RuvA tetramers; dsDNA enters through RuvA and exits via RuvB. An RuvB hexamer assembles on each DNA strand where it exits the tetramer. Each RuvB hexamer is contacted by two RuvA subunits (via domain III) on 2 adjacent RuvB subunits; this complex drives branch migration. In the full resolvosome a probable DNA-RuvA(4)-RuvB(12)-RuvC(2) complex forms which resolves the HJ.

It localises to the cytoplasm. The enzyme catalyses ATP + H2O = ADP + phosphate + H(+). Functionally, the RuvA-RuvB-RuvC complex processes Holliday junction (HJ) DNA during genetic recombination and DNA repair, while the RuvA-RuvB complex plays an important role in the rescue of blocked DNA replication forks via replication fork reversal (RFR). RuvA specifically binds to HJ cruciform DNA, conferring on it an open structure. The RuvB hexamer acts as an ATP-dependent pump, pulling dsDNA into and through the RuvAB complex. RuvB forms 2 homohexamers on either side of HJ DNA bound by 1 or 2 RuvA tetramers; 4 subunits per hexamer contact DNA at a time. Coordinated motions by a converter formed by DNA-disengaged RuvB subunits stimulates ATP hydrolysis and nucleotide exchange. Immobilization of the converter enables RuvB to convert the ATP-contained energy into a lever motion, pulling 2 nucleotides of DNA out of the RuvA tetramer per ATP hydrolyzed, thus driving DNA branch migration. The RuvB motors rotate together with the DNA substrate, which together with the progressing nucleotide cycle form the mechanistic basis for DNA recombination by continuous HJ branch migration. Branch migration allows RuvC to scan DNA until it finds its consensus sequence, where it cleaves and resolves cruciform DNA. In Listeria monocytogenes serovar 1/2a (strain ATCC BAA-679 / EGD-e), this protein is Holliday junction branch migration complex subunit RuvB.